A 392-amino-acid chain; its full sequence is Formate-dependent phosphoribosylglycinamide formyltransferase (392 aa).

N(1)-(5-phospho-beta-D-ribosyl)glycinamide contacts are provided by residues 22–23 (EL) and Glu82. ATP-binding positions include Arg114, Lys155, 160 to 165 (SSGKGQ), 195 to 198 (EGVV), and Glu203. The ATP-grasp domain maps to 119-308 (RLAAEELQLP…EFALHVRAFL (190 aa)). Mg(2+) is bound by residues Glu267 and Glu279. N(1)-(5-phospho-beta-D-ribosyl)glycinamide contacts are provided by residues Asp286, Lys355, and 362–363 (RR).

Belongs to the PurK/PurT family. In terms of assembly, homodimer.

The catalysed reaction is N(1)-(5-phospho-beta-D-ribosyl)glycinamide + formate + ATP = N(2)-formyl-N(1)-(5-phospho-beta-D-ribosyl)glycinamide + ADP + phosphate + H(+). It functions in the pathway purine metabolism; IMP biosynthesis via de novo pathway; N(2)-formyl-N(1)-(5-phospho-D-ribosyl)glycinamide from N(1)-(5-phospho-D-ribosyl)glycinamide (formate route): step 1/1. Involved in the de novo purine biosynthesis. Catalyzes the transfer of formate to 5-phospho-ribosyl-glycinamide (GAR), producing 5-phospho-ribosyl-N-formylglycinamide (FGAR). Formate is provided by PurU via hydrolysis of 10-formyl-tetrahydrofolate. The chain is Formate-dependent phosphoribosylglycinamide formyltransferase from Escherichia coli O1:K1 / APEC.